Reading from the N-terminus, the 926-residue chain is Up-regulator of cell proliferation (926 aa).

Ser3 carries the post-translational modification Phosphoserine. The VLIG-type G domain occupies 689–924 (RSRLVVLSAL…NIQQLIELLR (236 aa)).

This sequence belongs to the TRAFAC class dynamin-like GTPase superfamily. Very large inducible GTPase (VLIG) family.

Its subcellular location is the cytoplasm. The protein resides in the nucleus. Its function is as follows. May be involved in cell cycle progression through the regulation of cyclin D1 expression. The polypeptide is Up-regulator of cell proliferation (Urgcp) (Mus musculus (Mouse)).